A 203-amino-acid polypeptide reads, in one-letter code: NAD(P)H-quinone oxidoreductase subunit M, chloroplastic (203 aa).

Residues 1-21 (MAASSSYMACAKFSMLGWLGG) constitute a chloroplast transit peptide. Low complexity predominate over residues 34 to 48 (SPQEQAEVQESQEVN). The disordered stretch occupies residues 34-61 (SPQEQAEVQESQEVNAQEEEKVKQPVQP).

This sequence belongs to the NDH complex subunit M family. Part of the chloroplast NDH complex, composed of a mixture of chloroplast and nucleus encoded subunits. Component of the NDH subcomplex A, at least composed of ndhH, ndhI, ndhJ, ndhK, ndhL, ndhM, ndhN and ndhO.

It is found in the plastid. It localises to the chloroplast thylakoid membrane. It carries out the reaction a plastoquinone + NADH + (n+1) H(+)(in) = a plastoquinol + NAD(+) + n H(+)(out). The catalysed reaction is a plastoquinone + NADPH + (n+1) H(+)(in) = a plastoquinol + NADP(+) + n H(+)(out). Its function is as follows. NDH shuttles electrons from NAD(P)H:plastoquinone, via FMN and iron-sulfur (Fe-S) centers, to quinones in the photosynthetic chain and possibly in a chloroplast respiratory chain. The immediate electron acceptor for the enzyme in this species is believed to be plastoquinone. Couples the redox reaction to proton translocation, and thus conserves the redox energy in a proton gradient. This chain is NAD(P)H-quinone oxidoreductase subunit M, chloroplastic, found in Populus jackii (Balm of Gilead).